Consider the following 462-residue polypeptide: tRNA modification GTPase MnmE (462 aa).

Arginine 27, glutamate 89, and arginine 128 together coordinate (6S)-5-formyl-5,6,7,8-tetrahydrofolate. A TrmE-type G domain is found at 223–383 (GLKIAIVGRP…LEAAILAAVG (161 aa)). Residue asparagine 233 coordinates K(+). Residues 233 to 238 (NVGKSS), 252 to 258 (TDLPGTT), and 277 to 280 (DTAG) contribute to the GTP site. Residue serine 237 participates in Mg(2+) binding. K(+) is bound by residues threonine 252, leucine 254, and threonine 257. A Mg(2+)-binding site is contributed by threonine 258. Position 462 (lysine 462) interacts with (6S)-5-formyl-5,6,7,8-tetrahydrofolate.

This sequence belongs to the TRAFAC class TrmE-Era-EngA-EngB-Septin-like GTPase superfamily. TrmE GTPase family. As to quaternary structure, homodimer. Heterotetramer of two MnmE and two MnmG subunits. Requires K(+) as cofactor.

It localises to the cytoplasm. Functionally, exhibits a very high intrinsic GTPase hydrolysis rate. Involved in the addition of a carboxymethylaminomethyl (cmnm) group at the wobble position (U34) of certain tRNAs, forming tRNA-cmnm(5)s(2)U34. The protein is tRNA modification GTPase MnmE of Synechococcus elongatus (strain ATCC 33912 / PCC 7942 / FACHB-805) (Anacystis nidulans R2).